Reading from the N-terminus, the 304-residue chain is Porphobilinogen deaminase (304 aa).

C240 bears the S-(dipyrrolylmethanemethyl)cysteine mark.

The protein belongs to the HMBS family. As to quaternary structure, monomer. The cofactor is dipyrromethane.

It carries out the reaction 4 porphobilinogen + H2O = hydroxymethylbilane + 4 NH4(+). It functions in the pathway porphyrin-containing compound metabolism; protoporphyrin-IX biosynthesis; coproporphyrinogen-III from 5-aminolevulinate: step 2/4. Functionally, tetrapolymerization of the monopyrrole PBG into the hydroxymethylbilane pre-uroporphyrinogen in several discrete steps. In Xanthomonas campestris pv. campestris (strain B100), this protein is Porphobilinogen deaminase.